The following is a 134-amino-acid chain: MKKTPLLNIALSRTIAGLGHGDILVIGDAGLPVPPGVELIDLALTPGIPDFTSVLRVVLSEMQVERHVLAEEMFQAAPLGLIEVEQMHARGEIGQREVMNHADFKALTRQARAVIRTGECRPYSNIALVAGVTF.

Catalysis depends on His20, which acts as the Proton donor. Substrate contacts are provided by residues Asp28, His101, and 123-125; that span reads YSN.

Belongs to the RbsD / FucU family. RbsD subfamily. As to quaternary structure, homodecamer.

It is found in the cytoplasm. The enzyme catalyses beta-D-ribopyranose = beta-D-ribofuranose. The protein operates within carbohydrate metabolism; D-ribose degradation; D-ribose 5-phosphate from beta-D-ribopyranose: step 1/2. In terms of biological role, catalyzes the interconversion of beta-pyran and beta-furan forms of D-ribose. The polypeptide is D-ribose pyranase (Pseudomonas entomophila (strain L48)).